The sequence spans 502 residues: ATP synthase subunit alpha (502 aa).

Residues 119–139 (GPIATTKSRPIESPAPGVMDR) are disordered. Residue 169-176 (GDRQTGKT) participates in ATP binding.

The protein belongs to the ATPase alpha/beta chains family. In terms of assembly, F-type ATPases have 2 components, CF(1) - the catalytic core - and CF(0) - the membrane proton channel. CF(1) has five subunits: alpha(3), beta(3), gamma(1), delta(1), epsilon(1). CF(0) has three main subunits: a(1), b(2) and c(9-12). The alpha and beta chains form an alternating ring which encloses part of the gamma chain. CF(1) is attached to CF(0) by a central stalk formed by the gamma and epsilon chains, while a peripheral stalk is formed by the delta and b chains.

It localises to the cell membrane. It carries out the reaction ATP + H2O + 4 H(+)(in) = ADP + phosphate + 5 H(+)(out). In terms of biological role, produces ATP from ADP in the presence of a proton gradient across the membrane. The alpha chain is a regulatory subunit. This Alkalihalophilus pseudofirmus (strain ATCC BAA-2126 / JCM 17055 / OF4) (Bacillus pseudofirmus) protein is ATP synthase subunit alpha.